The sequence spans 349 residues: Isopentenyl-diphosphate delta-isomerase (349 aa).

6–7 (RK) serves as a coordination point for substrate. Residues 62 to 64 (AMT), Ser93, and Asn122 contribute to the FMN site. Gln152 is a substrate binding site. Glu153 contributes to the Mg(2+) binding site. FMN-binding positions include Lys184, Thr214, 259–261 (GVR), and 280–281 (AG).

This sequence belongs to the IPP isomerase type 2 family. In terms of assembly, homooctamer. Dimer of tetramers. The cofactor is FMN. NADPH serves as cofactor. Mg(2+) is required as a cofactor.

The protein localises to the cytoplasm. The catalysed reaction is isopentenyl diphosphate = dimethylallyl diphosphate. Its function is as follows. Involved in the biosynthesis of isoprenoids. Catalyzes the 1,3-allylic rearrangement of the homoallylic substrate isopentenyl (IPP) to its allylic isomer, dimethylallyl diphosphate (DMAPP). The sequence is that of Isopentenyl-diphosphate delta-isomerase from Geobacillus sp. (strain WCH70).